Consider the following 360-residue polypeptide: Phospho-N-acetylmuramoyl-pentapeptide-transferase (360 aa).

10 consecutive transmembrane segments (helical) span residues 26-46, 70-90, 94-114, 136-156, 164-184, 199-219, 236-256, 263-283, 289-309, and 339-359; these read GVLATLTALVLSLFIGPFFIA, GTPTMGGALILLVVILTTLLW, GNPLVWVAVLTTLAFGAIGFV, LQSLVAFAAGGVLYALASNPV, FIPHVLIPMGAGFIVFSYFVI, GLAIVPTVMVAGALGVFAYVS, SGQMLIFCGALVGAGLGFLWF, VFMGDTGALALGAALAIVAIV, VLFIMGGVFVVETLSVIIQVV, and AVRFWIITVILVLVGLSSLKI.

This sequence belongs to the glycosyltransferase 4 family. MraY subfamily. Mg(2+) is required as a cofactor.

It is found in the cell inner membrane. The enzyme catalyses UDP-N-acetyl-alpha-D-muramoyl-L-alanyl-gamma-D-glutamyl-meso-2,6-diaminopimeloyl-D-alanyl-D-alanine + di-trans,octa-cis-undecaprenyl phosphate = di-trans,octa-cis-undecaprenyl diphospho-N-acetyl-alpha-D-muramoyl-L-alanyl-D-glutamyl-meso-2,6-diaminopimeloyl-D-alanyl-D-alanine + UMP. It functions in the pathway cell wall biogenesis; peptidoglycan biosynthesis. Its function is as follows. Catalyzes the initial step of the lipid cycle reactions in the biosynthesis of the cell wall peptidoglycan: transfers peptidoglycan precursor phospho-MurNAc-pentapeptide from UDP-MurNAc-pentapeptide onto the lipid carrier undecaprenyl phosphate, yielding undecaprenyl-pyrophosphoryl-MurNAc-pentapeptide, known as lipid I. The polypeptide is Phospho-N-acetylmuramoyl-pentapeptide-transferase (Acidithiobacillus ferrooxidans (strain ATCC 23270 / DSM 14882 / CIP 104768 / NCIMB 8455) (Ferrobacillus ferrooxidans (strain ATCC 23270))).